Consider the following 537-residue polypeptide: Glucocorticoid-induced transcript 1 protein (537 aa).

Disordered stretches follow at residues 1 to 45 and 62 to 254; these read MSTA…APAA and LLRG…HGNH. 4 positions are modified to phosphoserine: S69, S96, S98, and S99. Positions 69–86 are enriched in low complexity; the sequence is SPTRPAAAATAAAALGSL. Pro residues predominate over residues 97 to 106; sequence PSSPTPPPAA. Position 101 is a phosphothreonine (T101). A compositionally biased stretch (basic and acidic residues) spans 121-136; it reads RSPESRRRSSSPERRS. Residues 152–168 are compositionally biased toward low complexity; that stretch reads IRTSSTIRRTSSLDTIT. Residues S162 and S163 each carry the phosphoserine modification. T166 and T168 each carry phosphothreonine. Residues 178–192 are compositionally biased toward basic and acidic residues; the sequence is RDPHVHYPSCMRDKA. S214 is subject to Phosphoserine. The stretch at 217-244 forms a coiled coil; sequence SADQLKEIAKLRQQLQRSKQSSRHSKEK. S248 carries the phosphoserine modification. Position 256 is a phosphothreonine (T256). Position 293 is a phosphoserine (S293). Residues 309–321 are compositionally biased toward basic and acidic residues; sequence EVSKPLDIPDGRR. The interval 309–407 is disordered; the sequence is EVSKPLDIPD…KPNNSYMFKR (99 aa). Over residues 329–346 the composition is skewed to polar residues; that stretch reads RSSSTRSIDTQTPSVQER. The residue at position 333 (T333) is a Phosphothreonine. The residue at position 335 (S335) is a Phosphoserine. A Phosphothreonine modification is found at T340. Residues 347–359 are compositionally biased toward low complexity; sequence SSSCSSHSPCVSP. 5 positions are modified to phosphoserine: S384, S388, S396, S402, and S470. The segment at 495-520 is disordered; the sequence is SLSDDTSTADSLEPSAQQPSQQQQLL.

As to expression, predominantly expressed in thymus and testis, especially in CD4+CD8+ cells and at specific stages of spermatogenesis.

This is Glucocorticoid-induced transcript 1 protein (Glcci1) from Mus musculus (Mouse).